We begin with the raw amino-acid sequence, 154 residues long: Snaclec lebecin subunit beta (154 aa).

The first 23 residues, 1–23, serve as a signal peptide directing secretion; sequence MGRIIFVSFGLLVVFLSLSGTGA. Cystine bridges form between Cys-25/Cys-36, Cys-53/Cys-150, and Cys-125/Cys-142. A C-type lectin domain is found at 32–151; sequence DEEHCYYVFF…CGDDYPFVCK (120 aa). N-linked (GlcNAc...) asparagine glycosylation is present at Asn-139.

In terms of assembly, heterodimer with the alpha subunit (AC W5XDM0); disulfide-linked. In terms of tissue distribution, expressed by the venom gland.

It is found in the secreted. In terms of biological role, inhibits human breast cancer cells (MDA-MB231) migration and proliferation, as well as their adhesion to fibrinogen and fibronectin. This inhibition may be due to the binding to receptors of the integrin family, probably alpha-v/beta-3 (ITGAV/ITGB3) (40% inhibition of cell adhesion) and alpha-5/beta-1 (ITGA5/ITGB1) (by comparison with lebectin). In Macrovipera lebetinus (Levantine viper), this protein is Snaclec lebecin subunit beta.